The primary structure comprises 894 residues: Glutamate receptor 3 (894 aa).

The first 28 residues, 1-28 (MARQKKMGQNVLRAVFFLVLGLLGHSHG), serve as a signal peptide directing secretion. Residues 29–552 (GFPNTISIGG…GVFSFLDPLA (524 aa)) are Extracellular-facing. Residues Asn63, Asn266, Asn380, Asn415, and Asn422 are each glycosylated (N-linked (GlcNAc...) asparagine). Cys91 and Cys340 are oxidised to a cystine. Positions 508, 510, and 515 each coordinate L-glutamate. The chain crosses the membrane as a helical span at residues 553-573 (YEIWMCIVFASIGVSVVLFLV). The Cytoplasmic segment spans residues 574–602 (SRFSPYEWHLEDNNEEPRDPQSPPDPPNE). Residues 603–618 (FGIFNSLWFSLGAFMQ) constitute an intramembrane region (helical; Pore-forming). An intramembrane segment occupies 619–621 (QGC). A lipid anchor (S-palmitoyl cysteine) is attached at Cys621. Residues 622–627 (DISPRS) are Cytoplasmic-facing. The helical transmembrane segment at 628-648 (LSGRIVGGVWWFFTLIIISSY) threads the bilayer. Residues 649-823 (TANLAAFLTV…DKTSALSLSN (175 aa)) are Extracellular-facing. L-glutamate-binding residues include Ser686, Thr687, and Glu737. Cys750 and Cys805 form a disulfide bridge. A helical transmembrane segment spans residues 824-844 (VAGVFYILVGGLGLAMMVALI). The Cytoplasmic portion of the chain corresponds to 845 to 894 (EFCYKSRAESKRMKLTKNTQNFKPAPATNTQNYATYREGYNVYGTESVKI). A lipid anchor (S-palmitoyl cysteine) is attached at Cys847. A phosphotyrosine mark is found at Tyr877 and Tyr887.

This sequence belongs to the glutamate-gated ion channel (TC 1.A.10.1) family. GRIA3 subfamily. In terms of assembly, homotetramer or heterotetramer of pore-forming glutamate receptor subunits. Tetramers may be formed by the dimerization of dimers. Interacts with PICK1, GRIP1 and GRIP2. Found in a complex with GRIA1, GRIA2, GRIA4, CNIH2, CNIH3, CACNG2, CACNG3, CACNG4, CACNG5, CACNG7 and CACNG8. Interacts with CACNG5. Found in a complex with GRIA1, GRIA2, GRIA4, DLG4, CACNG8 and CNIH2.

It is found in the cell membrane. Its subcellular location is the postsynaptic cell membrane. The protein resides in the postsynaptic density membrane. The enzyme catalyses Ca(2+)(in) = Ca(2+)(out). Its function is as follows. Ionotropic glutamate receptor that functions as a ligand-gated cation channel, gated by L-glutamate and glutamatergic agonists such as alpha-amino-3-hydroxy-5-methyl-4-isoxazolepropionic acid (AMPA), quisqualic acid, and kainic acid. L-glutamate acts as an excitatory neurotransmitter at many synapses in the central nervous system and plays an important role in fast excitatory synaptic transmission by inducing long-term potentiation. Binding of the excitatory neurotransmitter L-glutamate induces a conformation change, leading to the opening of the cation channel, and thereby converts the chemical signal to an electrical impulse upon entry of calcium. The receptor then desensitizes rapidly and enters a transient inactive state, characterized by the presence of bound agonist. In the presence of CACNG8, shows resensitization which is characterized by a delayed accumulation of current flux upon continued application of glutamate. In Macaca fascicularis (Crab-eating macaque), this protein is Glutamate receptor 3.